The chain runs to 176 residues: Large ribosomal subunit protein uL15 (176 aa).

Positions 1–13 (MKLNDLRDNEGAR) are enriched in basic and acidic residues. Disordered stretches follow at residues 1–48 (MKLN…AIKG) and 151–176 (IPAA…AKAE). Over residues 21-35 (RGIGSGKGKTGGRGQ) the composition is skewed to gly residues. The span at 156-176 (PEHEKKAARSEANKKAKAKAE) shows a compositional bias: basic and acidic residues.

This sequence belongs to the universal ribosomal protein uL15 family. Part of the 50S ribosomal subunit.

Its function is as follows. Binds to the 23S rRNA. The protein is Large ribosomal subunit protein uL15 of Erythrobacter litoralis (strain HTCC2594).